A 197-amino-acid chain; its full sequence is Probable molybdenum cofactor guanylyltransferase (197 aa).

GTP is bound by residues 12 to 14 (LAG), K24, D71, and D103. D103 contributes to the Mg(2+) binding site.

It belongs to the MobA family. The cofactor is Mg(2+).

It localises to the cytoplasm. It catalyses the reaction Mo-molybdopterin + GTP + H(+) = Mo-molybdopterin guanine dinucleotide + diphosphate. In terms of biological role, transfers a GMP moiety from GTP to Mo-molybdopterin (Mo-MPT) cofactor (Moco or molybdenum cofactor) to form Mo-molybdopterin guanine dinucleotide (Mo-MGD) cofactor. The polypeptide is Probable molybdenum cofactor guanylyltransferase (Mycobacterium avium (strain 104)).